We begin with the raw amino-acid sequence, 319 residues long: Adenosine receptor A3 (319 aa).

Residues 1-15 are Extracellular-facing; it reads MEADNTTETDWLNIT. Residues N5 and N13 are each glycosylated (N-linked (GlcNAc...) asparagine). The chain crosses the membrane as a helical span at residues 16–38; sequence YITMEAAIGLCAVVGNMLVIWVV. Residues 39-49 are Cytoplasmic-facing; it reads KLNPTLRTTTV. The helical transmembrane segment at 50-73 threads the bilayer; the sequence is YFIVSLALADIAVGVLVIPLAIAV. Residues 74–85 are Extracellular-facing; that stretch reads SLQVKMHFYACL. C84 and C167 are disulfide-bonded. The chain crosses the membrane as a helical span at residues 86-107; that stretch reads FMSCVLLIFTHASIMSLLAIAV. Residues 108–127 are Cytoplasmic-facing; sequence HRYLRVKLTVRYRTVTTQRR. A helical membrane pass occupies residues 128 to 149; the sequence is IWLFLGLCWLVSFLVGLTPMFG. Residues 150–178 are Extracellular-facing; the sequence is WNRKATLASSQNSSTLLCHFRSVVSLDYM. Residue N161 is glycosylated (N-linked (GlcNAc...) asparagine). The helical transmembrane segment at 179 to 199 threads the bilayer; the sequence is VFFSFITWILVPLVVMCIIYL. Residues 200-232 are Cytoplasmic-facing; that stretch reads DIFYIIRNKLSQNLTGFRETRAFYGREFKTAKS. Residues 233–256 traverse the membrane as a helical segment; the sequence is LFLVLFLFALCWLPLSIINFVSYF. Over 257–262 the chain is Extracellular; sequence DVKIPD. A helical transmembrane segment spans residues 263 to 285; it reads VAMCLGILLSHANSMMNPIVYAC. The Cytoplasmic segment spans residues 286 to 319; sequence KIKKFKETYFLILRAVRLCQTSDSLDSNMEQTTE. Residue C304 is the site of S-palmitoyl cysteine attachment.

Belongs to the G-protein coupled receptor 1 family. Post-translationally, phosphorylation on Thr-317 and Thr-318 may be crucial for rapid desensitization. Phosphorylation on Thr-317 may be necessary for phosphorylation on Thr-318 to occur.

Its subcellular location is the cell membrane. Its function is as follows. Receptor for adenosine. The activity of this receptor is mediated by G proteins which inhibits adenylyl cyclase. The protein is Adenosine receptor A3 (Adora3) of Mus musculus (Mouse).